Reading from the N-terminus, the 287-residue chain is ATP synthase gamma chain (287 aa).

This sequence belongs to the ATPase gamma chain family. As to quaternary structure, F-type ATPases have 2 components, CF(1) - the catalytic core - and CF(0) - the membrane proton channel. CF(1) has five subunits: alpha(3), beta(3), gamma(1), delta(1), epsilon(1). CF(0) has three main subunits: a, b and c.

Its subcellular location is the cell membrane. In terms of biological role, produces ATP from ADP in the presence of a proton gradient across the membrane. The gamma chain is believed to be important in regulating ATPase activity and the flow of protons through the CF(0) complex. The chain is ATP synthase gamma chain from Geobacillus stearothermophilus (Bacillus stearothermophilus).